Here is a 139-residue protein sequence, read N- to C-terminus: Small ribosomal subunit protein uS11A (139 aa).

The tract at residues 119-139 (DVTPIPTDSTRRKGGRRGRRL) is disordered. A compositionally biased stretch (basic residues) spans 130–139 (RKGGRRGRRL).

The protein belongs to the universal ribosomal protein uS11 family. In terms of assembly, component of the small ribosomal subunit (SSU). Mature yeast ribosomes consist of a small (40S) and a large (60S) subunit. The 40S small subunit contains 1 molecule of ribosomal RNA (18S rRNA) and at least 33 different proteins. The large 60S subunit contains 3 rRNA molecules (25S, 5.8S and 5S rRNA) and at least 46 different proteins. uS11 interacts with eS1 forming part of the mRNA exit tunnel. uS11 interacts with snoRNA U3. uS11 interacts with MPP10. Component of the ribosomal small subunit (SSU) processome composed of at least 40 protein subunits and snoRNA U3.

The protein localises to the cytoplasm. It is found in the nucleus. It localises to the nucleolus. Functionally, component of the ribosome, a large ribonucleoprotein complex responsible for the synthesis of proteins in the cell. The small ribosomal subunit (SSU) binds messenger RNAs (mRNAs) and translates the encoded message by selecting cognate aminoacyl-transfer RNA (tRNA) molecules. The large subunit (LSU) contains the ribosomal catalytic site termed the peptidyl transferase center (PTC), which catalyzes the formation of peptide bonds, thereby polymerizing the amino acids delivered by tRNAs into a polypeptide chain. The nascent polypeptides leave the ribosome through a tunnel in the LSU and interact with protein factors that function in enzymatic processing, targeting, and the membrane insertion of nascent chains at the exit of the ribosomal tunnel. uS11 is involved in nucleolar processing of pre-18S ribosomal RNA and ribosome assembly. In Schizosaccharomyces pombe (strain 972 / ATCC 24843) (Fission yeast), this protein is Small ribosomal subunit protein uS11A (rps1401).